The chain runs to 352 residues: Ribosomal RNA large subunit methyltransferase M (352 aa).

Residues Ser-184, 217 to 220 (APGG), Asp-236, Asp-256, and Asp-272 contribute to the S-adenosyl-L-methionine site. The active-site Proton acceptor is the Lys-301.

It belongs to the class I-like SAM-binding methyltransferase superfamily. RNA methyltransferase RlmE family. RlmM subfamily. As to quaternary structure, monomer.

The protein resides in the cytoplasm. The enzyme catalyses cytidine(2498) in 23S rRNA + S-adenosyl-L-methionine = 2'-O-methylcytidine(2498) in 23S rRNA + S-adenosyl-L-homocysteine + H(+). In terms of biological role, catalyzes the 2'-O-methylation at nucleotide C2498 in 23S rRNA. In Pseudomonas paraeruginosa (strain DSM 24068 / PA7) (Pseudomonas aeruginosa (strain PA7)), this protein is Ribosomal RNA large subunit methyltransferase M.